The following is a 317-amino-acid chain: MSEERGMKEQTISEMAQEMAHTTSEGLKKRIRKLYTFDELPAWQKDNELILSGYVRETNSVKECLRAMTYFNNESINIYTHLIPGVAYLVLFLIFADLVLAQLLPGLDAGEHRMLRFYLLGAFTCLACSSCFHCLKQHSEPHSRLWSKVDYLGILAQITCSTISLLYYGYHSYPSHFVFFSTLTVALCSACAVLVLNDSFNTVAFRPLRAFLFMAFGLSGVIPVLAGSYQFGFAEWAARIQLKYVLYEAVFYITGALVYGFRIPERFAPGKFDMVGHSHQIFHLLVVLGTLCHFRAVTGSYIFICTGKHYSSLLMFI.

The Lumenal portion of the chain corresponds to 1–80 (MSEERGMKEQ…FNNESINIYT (80 aa)). Residue asparagine 73 is glycosylated (N-linked (GlcNAc...) asparagine). A helical membrane pass occupies residues 81-101 (HLIPGVAYLVLFLIFADLVLA). Residues 102 to 113 (QLLPGLDAGEHR) are Cytoplasmic-facing. Residues 114–136 (MLRFYLLGAFTCLACSSCFHCLK) form a helical membrane-spanning segment. The Lumenal portion of the chain corresponds to 137 to 148 (QHSEPHSRLWSK). A helical transmembrane segment spans residues 149-169 (VDYLGILAQITCSTISLLYYG). Topologically, residues 170–175 (YHSYPS) are cytoplasmic. The helical transmembrane segment at 176-196 (HFVFFSTLTVALCSACAVLVL) threads the bilayer. The N-linked (GlcNAc...) asparagine glycan is linked to asparagine 197. Residues 197–210 (NDSFNTVAFRPLRA) are Lumenal-facing. The chain crosses the membrane as a helical span at residues 211-231 (FLFMAFGLSGVIPVLAGSYQF). At 232-243 (GFAEWAARIQLK) the chain is on the cytoplasmic side. A helical membrane pass occupies residues 244-264 (YVLYEAVFYITGALVYGFRIP). Residues 265-283 (ERFAPGKFDMVGHSHQIFH) are Lumenal-facing. A helical transmembrane segment spans residues 284–304 (LLVVLGTLCHFRAVTGSYIFI). Residues 305–317 (CTGKHYSSLLMFI) are Cytoplasmic-facing.

The protein belongs to the ADIPOR family.

Its subcellular location is the endoplasmic reticulum membrane. Its function is as follows. ADIPOR-like receptor involved in zinc metabolism either by altering membrane sterol content or by directly altering cellular zinc levels. The chain is ADIPOR-like receptor IZH1 (IZH1) from Eremothecium gossypii (strain ATCC 10895 / CBS 109.51 / FGSC 9923 / NRRL Y-1056) (Yeast).